Consider the following 243-residue polypeptide: ATP synthase subunit a (243 aa).

7 consecutive transmembrane segments (helical) span residues asparagine 29–leucine 49, isoleucine 54–isoleucine 74, valine 89–phenylalanine 109, histidine 114–phenylalanine 134, isoleucine 144–phenylalanine 164, isoleucine 182–leucine 202, and alanine 208–phenylalanine 228.

This sequence belongs to the ATPase A chain family. As to quaternary structure, F-type ATPases have 2 components, CF(1) - the catalytic core - and CF(0) - the membrane proton channel. CF(1) has five subunits: alpha(3), beta(3), gamma(1), delta(1), epsilon(1). CF(0) has three main subunits: a(1), b(2) and c(9-12). The alpha and beta chains form an alternating ring which encloses part of the gamma chain. CF(1) is attached to CF(0) by a central stalk formed by the gamma and epsilon chains, while a peripheral stalk is formed by the delta and b chains.

Its subcellular location is the cell inner membrane. Its function is as follows. Key component of the proton channel; it plays a direct role in the translocation of protons across the membrane. This chain is ATP synthase subunit a, found in Ehrlichia chaffeensis (strain ATCC CRL-10679 / Arkansas).